The sequence spans 424 residues: Zinc finger and BTB domain-containing protein 6 (424 aa).

The 65-residue stretch at 33–97 (CDVSIYINDT…CYTGALEVKR (65 aa)) folds into the BTB domain. Serine 202 is modified (phosphoserine). 4 consecutive C2H2-type zinc fingers follow at residues 301–323 (HQCP…LKMH), 326–348 (FLCL…IRGH), 354–376 (FQCT…LNIH), and 382–405 (YKCH…TSVH). Positions 402–424 (TSVHGRSSGEKLSRPDLKRQSLL) are disordered. Residues 408-424 (SSGEKLSRPDLKRQSLL) are compositionally biased toward basic and acidic residues.

Widely expressed with highest levels in brain.

The protein localises to the nucleus. In terms of biological role, may be involved in transcriptional regulation. The chain is Zinc finger and BTB domain-containing protein 6 (ZBTB6) from Homo sapiens (Human).